A 751-amino-acid polypeptide reads, in one-letter code: Probable alpha-galactosidase C (751 aa).

The N-terminal stretch at 1 to 27 is a signal peptide; it reads MFGSPKRAALAAASLLAIFGNGPSVMA. N-linked (GlcNAc...) asparagine glycosylation is found at Asn49, Asn57, Asn162, Asn186, Asn194, Asn366, Asn433, Asn452, and Asn500. Asp510 serves as the catalytic Nucleophile. Asp572 acts as the Proton donor in catalysis. N-linked (GlcNAc...) asparagine glycosylation occurs at Asn720.

Belongs to the glycosyl hydrolase 36 family. Homotetramer. Requires Mg(2+) as cofactor. It depends on NAD(+) as a cofactor.

The protein resides in the secreted. It catalyses the reaction Hydrolysis of terminal, non-reducing alpha-D-galactose residues in alpha-D-galactosides, including galactose oligosaccharides, galactomannans and galactolipids.. In terms of biological role, hydrolyzes a variety of simple alpha-D-galactoside as well as more complex molecules such as oligosaccharides and polysaccharides. This is Probable alpha-galactosidase C (aglC) from Aspergillus flavus (strain ATCC 200026 / FGSC A1120 / IAM 13836 / NRRL 3357 / JCM 12722 / SRRC 167).